Consider the following 445-residue polypeptide: MREILHIQGGQCGNQIGAKFWEVICDEHGIDGTGRYAGDSDLQLERINVYYNEASGGRFVPRAVLMDLEPGTMDSVRSGPFGQIFRPDNFVFGQSGAGNNWAKGHYTEGAELIDSVLDVVRKEAENCDCLQGFQVCHSLGGGTGSGMGTLLISKIREEYPDRMMLTFSVFPSPKVSDTVVEPYNATLSVHQLVENADECMVLDNEALYDICFRTLKLATPSFGELNHLISATMSGVTCCLRFPGQLNSDLRKLAVNLIPFPRLHFFMVGFAPLTSRGSQMYRALTVPELTQQMWDAKNMMCAADPRHGRYLTASACFRGKMSTKEVDEQMLNVQNKNSSYFVEWIPNNVKSSVCDMPPRGLKMAGTFVGNSTSIQEMFRRVSEQFTAMFRRKAFLHWYTGEGMDEMEFTEAESNMNDLVAEYQQYQDATADEEYDEEEEEERDAE.

The GTP site is built by Q11, E69, S138, G142, T143, G144, N204, and N226. Residue E69 participates in Mg(2+) binding. The segment at 421–445 (EYQQYQDATADEEYDEEEEEERDAE) is disordered. The span at 429–445 (TADEEYDEEEEEERDAE) shows a compositional bias: acidic residues.

The protein belongs to the tubulin family. Dimer of alpha and beta chains. A typical microtubule is a hollow water-filled tube with an outer diameter of 25 nm and an inner diameter of 15 nM. Alpha-beta heterodimers associate head-to-tail to form protofilaments running lengthwise along the microtubule wall with the beta-tubulin subunit facing the microtubule plus end conferring a structural polarity. Microtubules usually have 13 protofilaments but different protofilament numbers can be found in some organisms and specialized cells. It depends on Mg(2+) as a cofactor.

The protein localises to the cytoplasm. The protein resides in the cytoskeleton. In terms of biological role, tubulin is the major constituent of microtubules, a cylinder consisting of laterally associated linear protofilaments composed of alpha- and beta-tubulin heterodimers. Microtubules grow by the addition of GTP-tubulin dimers to the microtubule end, where a stabilizing cap forms. Below the cap, tubulin dimers are in GDP-bound state, owing to GTPase activity of alpha-tubulin. In Triticum aestivum (Wheat), this protein is Tubulin beta-4 chain (TUBB4).